The chain runs to 43 residues: Photosystem II reaction center protein Psb30 (43 aa).

Residues 16–36 traverse the membrane as a helical segment; it reads IAQLTMLAMVLIAGPVVIVLL.

The protein belongs to the Psb30/Ycf12 family. As to quaternary structure, PSII is composed of 1 copy each of membrane proteins PsbA, PsbB, PsbC, PsbD, PsbE, PsbF, PsbH, PsbI, PsbJ, PsbK, PsbL, PsbM, PsbT, PsbX, PsbY, PsbZ, Psb30/Ycf12, peripheral proteins PsbO, CyanoQ (PsbQ), PsbU, PsbV and a large number of cofactors. It forms dimeric complexes.

It is found in the cellular thylakoid membrane. In terms of biological role, a core subunit of photosystem II (PSII), probably helps stabilize the reaction center. In Trichodesmium erythraeum (strain IMS101), this protein is Photosystem II reaction center protein Psb30.